A 344-amino-acid polypeptide reads, in one-letter code: Ferrochelatase (344 aa).

Fe cation-binding residues include His214 and Glu295.

This sequence belongs to the ferrochelatase family.

The protein resides in the cytoplasm. It carries out the reaction heme b + 2 H(+) = protoporphyrin IX + Fe(2+). Its pathway is porphyrin-containing compound metabolism; protoheme biosynthesis; protoheme from protoporphyrin-IX: step 1/1. In terms of biological role, catalyzes the ferrous insertion into protoporphyrin IX. This is Ferrochelatase from Rhizobium etli (strain ATCC 51251 / DSM 11541 / JCM 21823 / NBRC 15573 / CFN 42).